The sequence spans 397 residues: Efflux pump periplasmic linker BepD (397 aa).

The first 26 residues, 1–26 (MTLNRTIRCFAAGAAFIVFAAQPALA), serve as a signal peptide directing secretion. Residues 98 to 139 (APYQAELEKAQAQVAQAEAQYQQSIRDAERAEQLVQQKVQSA) adopt a coiled-coil conformation.

The protein belongs to the membrane fusion protein (MFP) (TC 8.A.1) family. As to quaternary structure, probably part of a tripartite efflux pump, which is composed of an outer membrane efflux protein, an inner membrane protein and a protein that expands the periplasmic space. Could form a tripartite pump with BepC and BepE.

The protein localises to the periplasm. In terms of biological role, involved in resistance to several unrelated toxic compounds, such as dyes, detergents and antibiotics. In Brucella suis biovar 1 (strain 1330), this protein is Efflux pump periplasmic linker BepD (bepD).